A 100-amino-acid polypeptide reads, in one-letter code: Small cysteine and glycine repeat-containing protein 3 (100 aa).

The segment at 4–82 (CGCGSCGGCG…RRTCRSCGCG (79 aa)) is 13 X 2 AA repeats of CG.

It belongs to the KRTAP type 28 family.

In the hair cortex, hair keratin intermediate filaments are embedded in an interfilamentous matrix, consisting of hair keratin-associated proteins (KRTAP), which are essential for the formation of a rigid and resistant hair shaft through their extensive disulfide bond cross-linking with abundant cysteine residues of hair keratins. The matrix proteins include the high-sulfur and high-glycine-tyrosine keratins. The protein is Small cysteine and glycine repeat-containing protein 3 of Homo sapiens (Human).